The sequence spans 224 residues: UPF0173 metal-dependent hydrolase EF_1371 (224 aa).

This sequence belongs to the UPF0173 family.

This chain is UPF0173 metal-dependent hydrolase EF_1371, found in Enterococcus faecalis (strain ATCC 700802 / V583).